The primary structure comprises 226 residues: Deoxyribose-phosphate aldolase (226 aa).

The Proton donor/acceptor role is filled by glutamate 96. The active-site Schiff-base intermediate with acetaldehyde is lysine 157. Lysine 185 functions as the Proton donor/acceptor in the catalytic mechanism.

The protein belongs to the DeoC/FbaB aldolase family. DeoC type 1 subfamily.

The protein resides in the cytoplasm. It catalyses the reaction 2-deoxy-D-ribose 5-phosphate = D-glyceraldehyde 3-phosphate + acetaldehyde. It participates in carbohydrate degradation; 2-deoxy-D-ribose 1-phosphate degradation; D-glyceraldehyde 3-phosphate and acetaldehyde from 2-deoxy-alpha-D-ribose 1-phosphate: step 2/2. Functionally, catalyzes a reversible aldol reaction between acetaldehyde and D-glyceraldehyde 3-phosphate to generate 2-deoxy-D-ribose 5-phosphate. The sequence is that of Deoxyribose-phosphate aldolase from Gloeobacter violaceus (strain ATCC 29082 / PCC 7421).